The following is a 322-amino-acid chain: Cell division control protein 10 (322 aa).

Methionine 1 is modified (N-acetylmethionine). The Septin-type G domain maps to 29 to 302 (KGFQFNIMVV…EGFRARQLIA (274 aa)). The interval 39–46 (GQSGLGKS) is G1 motif. GTP-binding positions include 39 to 46 (GQSGLGKS), threonine 74, glycine 100, and 180 to 188 (KSDTLTLDE). The interval 97 to 100 (DTPG) is G3 motif. Residues 179 to 182 (GKSD) form a G4 motif region. Threonine 216 is modified (phosphothreonine). GTP is bound by residues glycine 236 and arginine 251.

The protein belongs to the TRAFAC class TrmE-Era-EngA-EngB-Septin-like GTPase superfamily. Septin GTPase family. As to quaternary structure, component of the septin complex which consists of CDC3, CDC10, CDC11, CDC12 and probably SHS1 and rearranges to a cortical collar of highly ordered filaments at the mother-bud-neck. A complex formed by CDC3, CDC10, CDC11 and CDC12 is capable of forming long filaments in vitro and the components seem to be present in a 2:2:2:2 arrangement in vivo. The filaments are proposed to be formed by the end-to-end polymerization of CDC3-CDC12-CDC11 complexes with CDC10 serving as a bridge to bundle the polymers into paired filaments. Component of the GIN4 complex composed of at least BNI5, CDC3, CDC10, CDC11, CDC12, GIN4, NAP1 and SHS1. Self-associates. Interacts with SYP1.

The protein resides in the membrane. It is found in the bud neck. Functionally, septins are GTPases involved in cytokinesis that assemble early in the cell cycle as a patch at the incipient bud site and form a ring approximate 15 minutes before bud emergence, which transforms into an hour-glass shaped collar of cortical filaments that spans both sides of the mother-bud neck. This collar persists until just before cytokinesis, when it splits into two rings that occupy opposite sides of the neck. The septins at the bud neck serve as a structural scaffold that recruits different components involved in diverse processes at specific stages during the cell cycle. Many proteins bind asymmetrically to the septin collar. The septin assembly is regulated by protein kinases GIN4 and/or CLA4. May act by recruiting MYO1 and HOF1, a protein involved in septation, to the site of cleavage. Septins are also involved in cell morphogenesis, bud site selection, chitin deposition, cell cycle regulation, cell compartmentalization and spore wall formation. This is Cell division control protein 10 (CDC10) from Saccharomyces cerevisiae (strain ATCC 204508 / S288c) (Baker's yeast).